We begin with the raw amino-acid sequence, 2878 residues long: Trinucleotide repeat-containing gene 18 protein (2878 aa).

Disordered stretches follow at residues 1 to 54 and 102 to 194; these read MDGR…KYMA and TQKD…SSRL. Positions 119–128 are enriched in polar residues; sequence TPSSRTPSGH. Basic and acidic residues-rich tracts occupy residues 137–149, 158–169, and 179–194; these read SSRE…RAGR, GKKDPRAREEVS, and QEAR…SSRL. The residue at position 199 (S199) is a Phosphoserine. 12 disordered regions span residues 259–289, 313–442, 487–507, 540–655, 865–1002, 1033–1104, 1127–1146, 1171–1228, 1429–1535, 1613–1668, 1694–1718, and 1737–1787; these read ARPC…AGVY, FDER…KWKP, MPRA…AAHG, SPFG…DDEC, AQEH…ALFT, ADGL…LESP, LEAQ…SEVS, LGTQ…DCDL, ELVK…DSSS, LGLS…DEDE, VPKN…RTLK, and EARS…GEQA. Residues 264–283 are compositionally biased toward pro residues; the sequence is SPLPPPPPLPPKGPPAPPSS. Basic and acidic residues-rich tracts occupy residues 327–337 and 350–362; these read RDVRAREREPG and RLER…EKSS. Over residues 376-390 the composition is skewed to low complexity; sequence PPAARSSRSSPDARA. Residues 396 to 411 are compositionally biased toward basic and acidic residues; it reads ELLKPEADPRPCERAP. The residue at position 540 (S540) is a Phosphoserine. K549 is covalently cross-linked (Glycyl lysine isopeptide (Lys-Gly) (interchain with G-Cter in SUMO2)). 2 stretches are compositionally biased toward basic and acidic residues: residues 580-589 and 865-881; these read LKRDPERPES and AQEH…KRSL. Pro residues predominate over residues 958–969; that stretch reads SSPPPASPPPTP. The segment covering 972 to 993 has biased composition (basic and acidic residues); the sequence is TRKEEAPENVVEKKDLELEKET. 2 positions are modified to phosphoserine: S1053 and S1062. A compositionally biased stretch (basic and acidic residues) spans 1068-1088; that stretch reads EPPRDSPEEEQLADREVKAEV. Residues 1410-1442 are a coiled coil; the sequence is LDFRMRLAEVQRRYKEKQRELVKLQRRRDSGDR. Basic and acidic residues predominate over residues 1429–1448; it reads ELVKLQRRRDSGDRHEDAHR. Residues 1449 to 1463 show a composition bias toward basic residues; the sequence is SLARRGPGRPRKRTH. A Phosphoserine modification is found at S1469. The segment covering 1478–1492 has biased composition (low complexity); sequence SSSGKGLSSKSLLTS. Residues 1745–1775 are compositionally biased toward acidic residues; the sequence is SSEEDSFDQDDSSEEEEEELEEEEEDEEEEG. S1789 and S1795 each carry phosphoserine. The span at 1825 to 1835 shows a compositional bias: basic and acidic residues; it reads EQKARKKEERQ. 3 disordered regions span residues 1825 to 2040, 2052 to 2080, and 2226 to 2681; these read EQKA…GAVS, FEAN…TPAP, and LLVP…RLPS. The segment covering 1876–1890 has biased composition (low complexity); it reads AAPGPGSRASGPSSP. Basic and acidic residues-rich tracts occupy residues 1891–1900, 1925–1936, 1966–1978, and 2024–2034; these read DKAKLVSEKG, LWTRRRSERIFL, PRKD…DRKD, and RGKEAKKENRG. T2077 is subject to Phosphothreonine. Over residues 2238–2247 the composition is skewed to basic and acidic residues; the sequence is TSKDTGEVKE. The span at 2261-2270 shows a compositional bias: basic residues; sequence ARGRGRKPST. 2 stretches are compositionally biased toward basic and acidic residues: residues 2307–2316 and 2409–2419; these read STPEPVDKRA and AKEALLLREDP. Composition is skewed to low complexity over residues 2460 to 2470, 2491 to 2520, and 2540 to 2578; these read EPGPGLPLEDP, TTSS…SGSE, and RTCS…SSST. A compositionally biased stretch (acidic residues) spans 2579 to 2591; sequence TDEDSSCSSDEEA. The span at 2631-2641 shows a compositional bias: pro residues; that stretch reads TQPPPQPPPQP. S2681 is modified (phosphoserine). The BAH domain occupies 2727–2872; it reads EMIRIGDCAV…PTTGMIFSTD (146 aa).

This chain is Trinucleotide repeat-containing gene 18 protein (Tnrc18), found in Mus musculus (Mouse).